A 326-amino-acid polypeptide reads, in one-letter code: Putative HTH-type transcriptional regulator y4qH (326 aa).

One can recognise an HTH luxR-type domain in the interval 257–322 (AVQKIPALSL…VAAIKAISLG (66 aa)). A DNA-binding region (H-T-H motif) is located at residues 281-300 (SWDIGVIMRISENTVNFHIK).

The protein belongs to the autoinducer-regulated transcriptional regulatory protein family.

In Sinorhizobium fredii (strain NBRC 101917 / NGR234), this protein is Putative HTH-type transcriptional regulator y4qH.